A 197-amino-acid polypeptide reads, in one-letter code: Imidazoleglycerol-phosphate dehydratase (197 aa).

It belongs to the imidazoleglycerol-phosphate dehydratase family.

Its subcellular location is the cytoplasm. It carries out the reaction D-erythro-1-(imidazol-4-yl)glycerol 3-phosphate = 3-(imidazol-4-yl)-2-oxopropyl phosphate + H2O. Its pathway is amino-acid biosynthesis; L-histidine biosynthesis; L-histidine from 5-phospho-alpha-D-ribose 1-diphosphate: step 6/9. This Bradyrhizobium sp. (strain ORS 278) protein is Imidazoleglycerol-phosphate dehydratase.